Here is a 117-residue protein sequence, read N- to C-terminus: Hydrogenase maturation factor HypA (117 aa).

Position 2 (His2) interacts with Ni(2+). The Zn(2+) site is built by Cys73, Cys76, Cys89, and Cys92.

Belongs to the HypA/HybF family.

Functionally, involved in the maturation of [NiFe] hydrogenases. Required for nickel insertion into the metal center of the hydrogenase. This is Hydrogenase maturation factor HypA from Chlorobium luteolum (strain DSM 273 / BCRC 81028 / 2530) (Pelodictyon luteolum).